We begin with the raw amino-acid sequence, 98 residues long: Small ribosomal subunit protein bS20 (98 aa).

The protein belongs to the bacterial ribosomal protein bS20 family.

Binds directly to 16S ribosomal RNA. This Prochlorococcus marinus (strain NATL1A) protein is Small ribosomal subunit protein bS20.